We begin with the raw amino-acid sequence, 426 residues long: Serine--tRNA ligase (426 aa).

An L-serine-binding site is contributed by 235-237; it reads TAE. Residues 266-268 and Val-282 contribute to the ATP site; that span reads RRE. Glu-289 is a binding site for L-serine. 353–356 is an ATP binding site; sequence EASS. L-serine is bound at residue Ser-389.

This sequence belongs to the class-II aminoacyl-tRNA synthetase family. Type-1 seryl-tRNA synthetase subfamily. Homodimer. The tRNA molecule binds across the dimer.

Its subcellular location is the cytoplasm. The catalysed reaction is tRNA(Ser) + L-serine + ATP = L-seryl-tRNA(Ser) + AMP + diphosphate + H(+). It catalyses the reaction tRNA(Sec) + L-serine + ATP = L-seryl-tRNA(Sec) + AMP + diphosphate + H(+). The protein operates within aminoacyl-tRNA biosynthesis; selenocysteinyl-tRNA(Sec) biosynthesis; L-seryl-tRNA(Sec) from L-serine and tRNA(Sec): step 1/1. In terms of biological role, catalyzes the attachment of serine to tRNA(Ser). Is also able to aminoacylate tRNA(Sec) with serine, to form the misacylated tRNA L-seryl-tRNA(Sec), which will be further converted into selenocysteinyl-tRNA(Sec). This Chlorobium chlorochromatii (strain CaD3) protein is Serine--tRNA ligase.